A 130-amino-acid polypeptide reads, in one-letter code: DNA-binding protein HU (130 aa).

Belongs to the bacterial histone-like protein family.

In terms of biological role, histone-like DNA-binding protein which is capable of wrapping DNA to stabilize it, and thus to prevent its denaturation under extreme environmental conditions. This chain is DNA-binding protein HU (hup), found in Ureaplasma parvum serovar 3 (strain ATCC 700970).